Reading from the N-terminus, the 305-residue chain is UDP-3-O-acyl-N-acetylglucosamine deacetylase (305 aa).

Residues histidine 78, histidine 237, and aspartate 241 each contribute to the Zn(2+) site. Histidine 264 (proton donor) is an active-site residue.

It belongs to the LpxC family. Zn(2+) serves as cofactor.

The enzyme catalyses a UDP-3-O-[(3R)-3-hydroxyacyl]-N-acetyl-alpha-D-glucosamine + H2O = a UDP-3-O-[(3R)-3-hydroxyacyl]-alpha-D-glucosamine + acetate. The protein operates within glycolipid biosynthesis; lipid IV(A) biosynthesis; lipid IV(A) from (3R)-3-hydroxytetradecanoyl-[acyl-carrier-protein] and UDP-N-acetyl-alpha-D-glucosamine: step 2/6. In terms of biological role, catalyzes the hydrolysis of UDP-3-O-myristoyl-N-acetylglucosamine to form UDP-3-O-myristoylglucosamine and acetate, the committed step in lipid A biosynthesis. The protein is UDP-3-O-acyl-N-acetylglucosamine deacetylase of Burkholderia mallei (strain NCTC 10247).